The chain runs to 259 residues: Leucine-rich repeat-containing protein 3B (259 aa).

Positions 1-33 (MNLVDLWLTRSLSMCLLLQSFVLMILCFHSASM) are cleaved as a signal peptide. Residues 34–64 (CPKGCLCSSSGGLNVTCSNANLKEIPRDLPP) enclose the LRRNT domain. An N-linked (GlcNAc...) asparagine glycan is attached at Asn47. LRR repeat units lie at residues 65–86 (ETVL…IFKD), 89–110 (QLRV…AFKG), and 114–135 (TLQT…AFNN). Residue Asn94 is glycosylated (N-linked (GlcNAc...) asparagine). The LRRCT domain occupies 145 to 197 (NPWHCDCTLQQVLRSMVSNHETAHNVICKTSVLDEHAGRPFLNAANDADLCNL). Residues 205–225 (AMLVTMFGWFTMVISYVVYYV) form a helical membrane-spanning segment.

The protein belongs to the LRRC3 family.

It localises to the membrane. The sequence is that of Leucine-rich repeat-containing protein 3B (LRRC3B) from Bos taurus (Bovine).